The following is a 430-amino-acid chain: tRNA(Ile)-lysidine synthase (430 aa).

21-26 lines the ATP pocket; the sequence is SGGLDS.

Belongs to the tRNA(Ile)-lysidine synthase family.

The protein resides in the cytoplasm. It catalyses the reaction cytidine(34) in tRNA(Ile2) + L-lysine + ATP = lysidine(34) in tRNA(Ile2) + AMP + diphosphate + H(+). In terms of biological role, ligates lysine onto the cytidine present at position 34 of the AUA codon-specific tRNA(Ile) that contains the anticodon CAU, in an ATP-dependent manner. Cytidine is converted to lysidine, thus changing the amino acid specificity of the tRNA from methionine to isoleucine. In Salmonella schwarzengrund (strain CVM19633), this protein is tRNA(Ile)-lysidine synthase.